We begin with the raw amino-acid sequence, 421 residues long: GTPase Obg (421 aa).

In terms of domain architecture, Obg spans 1 to 158 (MFIDVAKIEL…KTIKLELKLL (158 aa)). A disordered region spans residues 21-40 (AFRREKYEPSGGPAGGDGGD). The region spanning 159 to 328 (ADVGLIGLPN…LMYLIADTLD (170 aa)) is the OBG-type G domain. GTP contacts are provided by residues 165 to 172 (GLPNVGKS), 190 to 194 (FTTLE), 211 to 214 (DIPG), 281 to 284 (NKTD), and 309 to 311 (SAA). Serine 172 and threonine 192 together coordinate Mg(2+). In terms of domain architecture, OCT spans 344 to 421 (FEEEKEPDFK…IGDVEFDFYE (78 aa)).

The protein belongs to the TRAFAC class OBG-HflX-like GTPase superfamily. OBG GTPase family. Monomer. Mg(2+) serves as cofactor.

The protein localises to the cytoplasm. In terms of biological role, an essential GTPase which binds GTP, GDP and possibly (p)ppGpp with moderate affinity, with high nucleotide exchange rates and a fairly low GTP hydrolysis rate. Plays a role in control of the cell cycle, stress response, ribosome biogenesis and in those bacteria that undergo differentiation, in morphogenesis control. The sequence is that of GTPase Obg from Finegoldia magna (strain ATCC 29328 / DSM 20472 / WAL 2508) (Peptostreptococcus magnus).